A 193-amino-acid chain; its full sequence is Ribosome hibernation promotion factor (193 aa).

This sequence belongs to the HPF/YfiA ribosome-associated protein family. Long HPF subfamily. Interacts with 100S ribosomes.

It is found in the cytoplasm. Might modulate either transcription and/or translation. Functionally, required for dimerization of active 70S ribosomes into 100S ribosomes in stationary phase; 100S ribosomes are translationally inactive and sometimes present during exponential growth. The polypeptide is Ribosome hibernation promotion factor (Picosynechococcus sp. (strain ATCC 27264 / PCC 7002 / PR-6) (Agmenellum quadruplicatum)).